The sequence spans 1632 residues: Guanine exchange factor for Rac 30 (1632 aa).

The 107-residue stretch at 16-122 folds into the Calponin-homology (CH) domain; sequence NIQIDSFTSW…VIFLLIQKIK (107 aa). Disordered stretches follow at residues 134–155 and 171–285; these read QGET…TPTK and FSHI…PTTG. Composition is skewed to low complexity over residues 137-154 and 180-284; these read TTGT…TTPT and QSSS…SPTT. IQ domains are found at residues 388 to 417 and 432 to 461; these read DLKK…KYKQ and AYRG…LYRR. The DH domain occupies 460–638; it reads RRNEIVKEIL…KDVAEYVNEK (179 aa). Residues 775 to 795 are compositionally biased toward low complexity; that stretch reads QINNQNNNQNNNQNNNLNNNN. The tract at residues 775–798 is disordered; it reads QINNQNNNQNNNQNNNLNNNNDDS. One can recognise a PH 1 domain in the interval 940–1038; that stretch reads DSEFSNVLEK…WISLIRLSIK (99 aa). Positions 1138-1156 are enriched in low complexity; it reads STSASQSQSQSPSPSPSHS. Positions 1138–1161 are disordered; sequence STSASQSQSQSPSPSPSHSINQKQ. Positions 1271–1389 constitute an Arf-GAP domain; it reads NSCGDNINND…NNNNNNSQNG (119 aa). The C4-type zinc-finger motif lies at 1286–1309; that stretch reads CAECGASDPSWVSINYGVVVCLDC. 3 stretches are compositionally biased toward low complexity: residues 1380–1402, 1409–1431, and 1441–1481; these read NNNN…TSTT, STPT…TTQT, and SSPT…TTPT. Positions 1380 to 1521 are disordered; the sequence is NNNNNNSQNG…SSHAITERKT (142 aa). Over residues 1500–1515 the composition is skewed to polar residues; sequence DTSNGKGTWSRGSSHA. The 100-residue stretch at 1532 to 1631 folds into the PH 2 domain; sequence KKEHQGYLFK…WLDVLSSHTT (100 aa).

The protein localises to the membrane. The protein resides in the cytoplasmic vesicle. It localises to the phagosome membrane. In terms of biological role, GTPase-activating protein for Rac involved in streaming and development. The sequence is that of Guanine exchange factor for Rac 30 (gxcDD) from Dictyostelium discoideum (Social amoeba).